The following is a 54-amino-acid chain: Movement protein p6 (54 aa).

Topologically, residues 1–10 (MDCVLRSYLL) are lumenal. The helical transmembrane segment at 11–31 (LAFGFLICLFLFCLVVFIWFV) threads the bilayer. The Cytoplasmic portion of the chain corresponds to 32–54 (YKQILFRTTAQSNEARHNHSTVV).

In terms of assembly, homodimer; disulfide-linked.

It is found in the host rough endoplasmic reticulum membrane. Its function is as follows. Transports viral genome to neighboring plant cells directly through plasmosdesmata, without any budding. The movement protein allows efficient cell to cell propagation, by bypassing the host cell wall barrier. Two movement proteins, p6, Hsp70h and three structural proteins, CP, CPm, and P64 are essential for cell-cell movement. Also plays a role in virion formation. Together with CPm and p64, encapsidates the 5'-terminal portion of the viral genome. The polypeptide is Movement protein p6 (Beet yellows virus (isolate Ukraine) (BYV)).